Reading from the N-terminus, the 61-residue chain is SPbeta prophage-derived uncharacterized protein YotK (61 aa).

The stretch at 7 to 57 (SIQTLLNKMDRQMKTVKEAIEEKDLQRAHRNLINLADNNEELMQEIRWVKK) forms a coiled coil.

This chain is SPbeta prophage-derived uncharacterized protein YotK (yotK), found in Bacillus subtilis (strain 168).